A 624-amino-acid polypeptide reads, in one-letter code: Double-stranded RNA-binding protein Staufen homolog 2 (624 aa).

5 DRBM domains span residues 55–122 (STSI…NGLA), 142–228 (QRAN…SEIS), 254–321 (MKSF…PEYG), 354–422 (RRRE…IADQ), and 540–604 (LTCL…EKAD). A disordered region spans residues 197 to 223 (LRNEPIPERSSLNGEANRGPEEDKDAN). Residues 214-223 (RGPEEDKDAN) show a composition bias toward basic and acidic residues. Disordered regions lie at residues 401 to 428 (EKTG…TPKG) and 592 to 624 (PFEQ…KAVV). Polar residues predominate over residues 415 to 426 (QNSGIADQTSTP). The segment covering 596–605 (AKLRGEKADN) has biased composition (basic and acidic residues).

Its function is as follows. RNA-binding protein required for the microtubule-dependent transport of RNAs within polarized cell types. This is Double-stranded RNA-binding protein Staufen homolog 2 (stau2) from Xenopus tropicalis (Western clawed frog).